The chain runs to 516 residues: Leucine-rich repeat transmembrane neuronal protein 2 (516 aa).

A signal peptide spans 1–33 (MGLHFKWPLGAPMLAAIYAMSMVLKMLPALGMA). Residues 34 to 61 (CPPKCRCEKLLFYCDSQGFHSVPNATDK) form the LRRNT domain. Residues 34-422 (CPPKCRCEKL…EPDNAIFTQR (389 aa)) are Extracellular-facing. The N-linked (GlcNAc...) asparagine glycan is linked to N57. LRR repeat units follow at residues 63–83 (SLGL…QFAS), 86–107 (QLTW…AFQG), 110–131 (KLKE…TFTQ), 134–155 (NLQN…LFYG), 158–179 (KLQT…LFWD), 182–203 (SLEF…GFAG), 206–227 (KLRE…HFLR), 230–251 (SLHT…MEWT), 254–275 (TLEK…VFET), and 278–299 (NLKI…ILNS). N126 is a glycosylation site (N-linked (GlcNAc...) asparagine). N243 carries an N-linked (GlcNAc...) asparagine glycan. Residues 311-362 (NLWECSARICALASWLGSFQGRWEHSILCHSPDHTQGEDILDAVHGFQLCWN) enclose the LRRCT domain. The N-linked (GlcNAc...) asparagine glycan is linked to N362. The chain crosses the membrane as a helical span at residues 423 to 443 (VITGTMALLFSFFFIIFIVFI). Over 444 to 516 (SRKCCPPTLR…QQLPYKECEV (73 aa)) the chain is Cytoplasmic. Positions 513–516 (ECEV) match the Involved in DLG4-binding motif.

The protein belongs to the LRRTM family. As to quaternary structure, interacts with DLG4. Interacts with neurexin NRXN1; interaction is mediated by heparan sulfate glycan modification on neurexin. As to expression, expressed in neuronal tissues.

It is found in the cell membrane. It localises to the postsynaptic cell membrane. In terms of biological role, involved in the development and maintenance of excitatory synapses in the vertebrate nervous system. Regulates surface expression of AMPA receptors and instructs the development of functional glutamate release sites. Acts as a ligand for the presynaptic receptors NRXN1-A and NRXN1-B. In Homo sapiens (Human), this protein is Leucine-rich repeat transmembrane neuronal protein 2 (LRRTM2).